A 440-amino-acid chain; its full sequence is MASETTEARAPFQPDGAYGWRCPEHSERPAELFCRRCGRCVCALCPVLGAHRGHPVGLAEEEAVRVQKLIQDCLECLATKKRQHADNIAHLEDAGERLKVYADSSKAWLTQKFTELRLLLDEEEVLAKKFIDKSTQLTLQVYREQAETCGKQIEVMDDFSTRVWGIGQEPNPVQLLQAYIATKTEMGQQMSPSELSHPVPLSFEPVKNFFKEFVEAIGNTLQTPMDTRLKENINCQLSNSSSTKPGALLKTSPSPERALFLKYARTPTLDPDTMHARLRLSPDGLTVRCSLLGRLGPRPAPRFDALRQVLGRDGFAAGRHYWEVDVQEAGVGWWVGAAYPSLRRRGASAAARLGCNRESWCVKRYDLEYWAFHDGQRSRLRPRRDPHRLGVFLDYEAGILAFYDVAGGMSHLHTFHAAFQEPLYPALRLWEGPISIPRLP.

Residues alanine 17–alanine 59 form a B box-type zinc finger. The Zn(2+) site is built by cysteine 22, histidine 25, cysteine 45, and histidine 51. The B30.2/SPRY domain occupies alanine 247–proline 440.

It belongs to the TRIM/RBCC family. Interacts with MAVS. Interacts with WRNIP1 and PPP6C; these interactions positively regulate the RIG-I signaling pathway. Interacts with CGAS; this interaction stabilizes CGAS and promotes type I interferon production. Interacts with USP14; this interaction mediates the cleavage of 'Lys-48'-linked ubiquitination of CGAS. Interacts with TBK1. Interacts with SPI1. Interacts with KDM4D and USP14. Ubiquitinated. Undergoes 'Lys-63'-linked polyubiquitination; this modification allows IKBKG/NEMO recruitment to MAVS. Undergoes 'Lys-48'-linked polyubiquitination by RNF125; this modification mediates its degradation via the ubiquitin-proteasome pathway. As to expression, expressed with high level in spleen, thymus, liver and testis. Expressed with low level in the brain, kidney, and skeletal muscle. Expressed in various differentiation stages of B-lymphocytes.

The protein localises to the mitochondrion outer membrane. The protein resides in the cytoplasmic vesicle. Its subcellular location is the phagosome. Functionally, plays a role in the innate immune defense against viruses. Facilitates the type I IFN response by interacting with MAVS at the outer mitochondria membrane and thereby recruiting NF-kappa-B essential modulator IKBKG/NEMO to the MAVS signalosome, leading to the activation of both the IFN regulatory factor 3/IRF3 and NF-kappa-B pathways. Positively regulates the CGAS-induced type I interferon signaling pathway by stabilizing CGAS and inhibiting its autophagic degradation. Inhibits the transcriptional activity of SPI1 in a dose-dependent manner. Also inhibits OPTN-mediated selective autophagic degradation of KDM4D and thereby negatively regulates H3K9me2 and H3K9me3. Mechanistically, recruits USP14 to remove the 'Lys-63'-linked ubiquitination of KDM4D, preventing its recognition by OPTN and subsequent degradation. Plays an essential role in the innate immune defense against viruses and bacteria. Facilitates the type I IFN response by interacting with MAVS at the outer mitochondria membrane and thereby recruiting NF-kappa-B essential modulator IKBKG/NEMO to the MAVS signalosome, leading to the activation of both the IFN regulatory factor 3/IRF3 and NF-kappa-B pathways. Positively regulates the CGAS-induced type I interferon signaling pathway by stabilizing CGAS and inhibiting its autophagic degradation. Acts as a scaffold between TBK1 and STAT3 to promote phosphorylation of STAT3 and resolve interferon-stimulated gene (ISG) expression. Inhibits the transcriptional activity of SPI1 in a dose-dependent manner. The chain is Tripartite motif-containing protein 14 (Trim14) from Mus musculus (Mouse).